A 430-amino-acid polypeptide reads, in one-letter code: Enolase (430 aa).

Gln-163 lines the (2R)-2-phosphoglycerate pocket. Catalysis depends on Glu-205, which acts as the Proton donor. Residues Asp-242, Glu-286, and Asp-313 each coordinate Mg(2+). 4 residues coordinate (2R)-2-phosphoglycerate: Lys-338, Arg-367, Ser-368, and Lys-389. Lys-338 functions as the Proton acceptor in the catalytic mechanism.

It belongs to the enolase family. Requires Mg(2+) as cofactor.

Its subcellular location is the cytoplasm. It is found in the secreted. It localises to the cell surface. It carries out the reaction (2R)-2-phosphoglycerate = phosphoenolpyruvate + H2O. It functions in the pathway carbohydrate degradation; glycolysis; pyruvate from D-glyceraldehyde 3-phosphate: step 4/5. Catalyzes the reversible conversion of 2-phosphoglycerate (2-PG) into phosphoenolpyruvate (PEP). It is essential for the degradation of carbohydrates via glycolysis. This is Enolase from Geotalea daltonii (strain DSM 22248 / JCM 15807 / FRC-32) (Geobacter daltonii).